The sequence spans 182 residues: Oligoribonuclease (182 aa).

An Exonuclease domain is found at leucine 8 to leucine 171. Tyrosine 129 is a catalytic residue.

This sequence belongs to the oligoribonuclease family.

The protein resides in the cytoplasm. Its function is as follows. 3'-to-5' exoribonuclease specific for small oligoribonucleotides. The polypeptide is Oligoribonuclease (Azoarcus sp. (strain BH72)).